Consider the following 772-residue polypeptide: Acylamino-acid-releasing enzyme 2 (772 aa).

Active-site charge relay system residues include Ser-617, Asp-708, and His-740.

It belongs to the peptidase S9C family. In terms of assembly, homotetramer.

It localises to the cytoplasm. It catalyses the reaction Cleavage of an N-acetyl or N-formyl amino acid from the N-terminus of a polypeptide.. Functionally, catalyzes the hydrolysis of the N-terminal peptide bond of an N-acetylated peptide to generate an N-acetylated amino acid and a peptide with a free N-terminus. The polypeptide is Acylamino-acid-releasing enzyme 2 (Oryza sativa subsp. japonica (Rice)).